Reading from the N-terminus, the 442-residue chain is Protein bag of marbles (442 aa).

A required for interaction with ubiquitin region spans residues F201–E250. Positions V408 to S442 are disordered. A compositionally biased stretch (acidic residues) spans S416–E425. The segment covering H433 to S442 has biased composition (basic residues).

As to quaternary structure, interacts (via central region) with ubiquitin. Interacts (via C-terminus) with otu (via OTU domain); the interaction enhances otu aggregation into amyloid-like structures and enhances its deubiquitinase activity. Together with otu interacts with CycA/cyclin-A (via C-terminus); the interaction stabilizes CycA by promoting and enhancing otu dependent deubiquitination of CycA. Together with otu interacts with Traf6. Part of a complex composed of at least tut, bam and bgcn; complex formation does not require RNA. Interacts (via C-terminus) with bgcn; the interaction is direct and is not disrupted by eIF4A. Interacts with eIF4A (via multiple contacts); the interaction is direct and is not disrupted by bgcn. Interacts (via N-terminus) with tut; the interaction is direct and mediates the interaction between tut and bgcn. As part of the bam-bgcn-tut complex associates with twin; may recruit the CCR4-NOT1 deadenylation complex to mRNA 3'-UTRs to mediate post-transcriptional regulation of expression. Part of a complex composed of at least mei-P26, bam, bgcn and Sxl; this complex is involved in translational repression of nanos mRNA. In terms of processing, ubiquitinated (C-terminal region). In terms of tissue distribution, in cystoblasts and/or very early cystocytes in testis (at protein level); expression levels are regulated by mei-P26. In cystoblasts and/or very early cystocytes in ovary. Expressed in the gut; expression levels increase with age.

Its subcellular location is the cytoplasm. Its function is as follows. Regulatory component of a deubiquitinase complex consisting of bam and otu. The complex deubiquitinates K63-linked polyubiquitinated proteins, antagonizing the ubiquitination activity of Traf6 and regulating the IMD immune signaling pathway. Otu-bam deubiquitinase activity is regulated by Traf6 dependent immune signaling regulation of bam expression levels; this forms a feedback loop that regulates the IMD immune signaling pathway and balances gut immune activity during aging. The complex deubiquitinates and stabilizes CycA/cyclin-A to regulate CycA-dependent differentiation. Required to initiate both male and female gametogenesis. Part of a complex with bgcn involved in 3'-UTR-dependent translational repression of a subset of mRNAs, including those for mei-P26, nanos and shg/E-cadherin. Repression of mei-P26 is targeted by let-7 miRNA. Involved in a regulatory cascade with mei-P26 to control the progression of cystocytes through transit amplification and the switch to spermatocyte differentiation; mei-P26 facilitates bam accumulation, which in turn represses translation of mei-P26. Forms a complex with tut and bgcn involved in 3'-UTR-dependent post-transcriptional repression of several 3'-RNA processing factors, which promotes germline stem cell lineage differentiation and mitosis-to-meiosis transition. The protein is Protein bag of marbles of Drosophila melanogaster (Fruit fly).